The following is a 274-amino-acid chain: 4-diphosphocytidyl-2-C-methyl-D-erythritol kinase (274 aa).

Lys8 is an active-site residue. ATP is bound at residue 94–104 (PSGAGLGGGSA). The active site involves Asp136.

Belongs to the GHMP kinase family. IspE subfamily.

The enzyme catalyses 4-CDP-2-C-methyl-D-erythritol + ATP = 4-CDP-2-C-methyl-D-erythritol 2-phosphate + ADP + H(+). It functions in the pathway isoprenoid biosynthesis; isopentenyl diphosphate biosynthesis via DXP pathway; isopentenyl diphosphate from 1-deoxy-D-xylulose 5-phosphate: step 3/6. In terms of biological role, catalyzes the phosphorylation of the position 2 hydroxy group of 4-diphosphocytidyl-2C-methyl-D-erythritol. The chain is 4-diphosphocytidyl-2-C-methyl-D-erythritol kinase from Bacteroides fragilis (strain YCH46).